The following is a 284-amino-acid chain: Cell division protein ZipA (284 aa).

Position 1 (Met1) is a topological domain, periplasmic. A helical transmembrane segment spans residues 2–22 (EIGLREWLIVIGIIVIAGILF). At 23–284 (DGWRRMRGGK…FERRALTQKR (262 aa)) the chain is on the cytoplasmic side. Residues 47-140 (PDDEGSAELL…SASHSDKDQP (94 aa)) form a disordered region. 3 stretches are compositionally biased toward basic and acidic residues: residues 62-75 (LDTH…EHDL), 83-102 (REPR…EPHQ), and 119-140 (SRDD…KDQP).

This sequence belongs to the ZipA family. As to quaternary structure, interacts with FtsZ via their C-terminal domains.

It localises to the cell inner membrane. Its function is as follows. Essential cell division protein that stabilizes the FtsZ protofilaments by cross-linking them and that serves as a cytoplasmic membrane anchor for the Z ring. Also required for the recruitment to the septal ring of downstream cell division proteins. This is Cell division protein ZipA from Pseudomonas fluorescens (strain ATCC BAA-477 / NRRL B-23932 / Pf-5).